A 398-amino-acid chain; its full sequence is Acetate kinase (398 aa).

Mg(2+) is bound at residue Asn8. ATP is bound at residue Lys15. Arg89 is a binding site for substrate. Asp146 functions as the Proton donor/acceptor in the catalytic mechanism. ATP contacts are provided by residues 206–210, 283–285, and 331–335; these read HIGNG, DMR, and GMGEN. Position 383 (Glu383) interacts with Mg(2+).

The protein belongs to the acetokinase family. In terms of assembly, homodimer. The cofactor is Mg(2+). Mn(2+) serves as cofactor.

It localises to the cytoplasm. The enzyme catalyses acetate + ATP = acetyl phosphate + ADP. Its pathway is metabolic intermediate biosynthesis; acetyl-CoA biosynthesis; acetyl-CoA from acetate: step 1/2. In terms of biological role, catalyzes the formation of acetyl phosphate from acetate and ATP. Can also catalyze the reverse reaction. This is Acetate kinase from Streptococcus pyogenes serotype M4 (strain MGAS10750).